The chain runs to 501 residues: Nucleic-acid-binding protein from transposon X-element (501 aa).

2 disordered regions span residues 20-71 (SSPQ…GNSN) and 105-128 (AAAK…SKPP). The segment at 285-302 (VQCHRCQQIGHTAKYCRK) adopts a CCHC-type zinc-finger fold. Disordered regions lie at residues 353 to 385 (RPRS…SRGG) and 400 to 443 (QPMS…TDAS). The segment covering 407-422 (QQQKQKQQPYDGSPSR) has biased composition (low complexity). Positions 434 to 443 (GTLQRSTDAS) are enriched in polar residues.

It localises to the virion. Strongly basic protein that binds directly to retroviral RNA and may be involved in its packaging and in the reverse transcription process. The protein is Nucleic-acid-binding protein from transposon X-element of Drosophila melanogaster (Fruit fly).